The chain runs to 308 residues: Glutaminase (308 aa).

Positions 66, 117, 161, 168, 192, 244, and 262 each coordinate substrate.

The protein belongs to the glutaminase family. Homotetramer.

It catalyses the reaction L-glutamine + H2O = L-glutamate + NH4(+). This chain is Glutaminase, found in Salmonella heidelberg (strain SL476).